Consider the following 196-residue polypeptide: SAGA-associated factor 11 homolog (196 aa).

A disordered region spans residues 1-22; the sequence is MSAANMPTTTGAQGSGNQVPTT. The SGF11-type zinc-finger motif lies at 106 to 127; that stretch reads CTCPNCDRLVAAARFAPHLEKC. Residues 144–196 are disordered; it reads TKEGASSAHLHSAGNAGGTDDEDDVDWSSDKRRKKSNQNSRNNGSKKNNGKTF. Ser172 carries the post-translational modification Phosphoserine. The span at 180–196 shows a compositional bias: low complexity; it reads NQNSRNNGSKKNNGKTF.

Belongs to the SGF11 family. As to quaternary structure, component of some SAGA transcription coactivator-HAT complexes, at least composed of Ada2b, not/nonstop, Pcaf/Gcn5, Sgf11 and Spt3. Within the SAGA complex, Sgf11, e(y)2, and not/nonstop form an additional subcomplex of SAGA called the DUB module (deubiquitination module). Interacts directly with not/nonstop. Interacts with the AMEX complex component xmas-2. Interacts with Cbp80; important for promoter recruitment of Sgf11 that is not associated with the DUB module.

It localises to the nucleus. The protein localises to the nucleoplasm. It is found in the cytoplasm. Functionally, component of the transcription regulatory histone acetylation (HAT) complex SAGA, a multiprotein complex that activates transcription by remodeling chromatin and mediating histone acetylation and deubiquitination. Within the SAGA complex, participates in a subcomplex that specifically deubiquitinates histone H2B. The SAGA complex is recruited to specific gene promoters by activators, where it is required for transcription. Required for nuclear receptor-mediated transactivation. Binds independently on SAGA to promoters in an RNA-dependent manner. Binds to mRNA and is essential for total mRNA export from the nucleus. Required to counteract heterochromatin silencing. Controls the development of neuronal connectivity in visual system by being required for accurate axon targeting in the optic lobe. Required for expression of ecdysone-induced genes such as br/broad. In Drosophila yakuba (Fruit fly), this protein is SAGA-associated factor 11 homolog.